The chain runs to 131 residues: Ribosome-binding factor A (131 aa).

It belongs to the RbfA family. As to quaternary structure, monomer. Binds 30S ribosomal subunits, but not 50S ribosomal subunits or 70S ribosomes.

The protein resides in the cytoplasm. Functionally, one of several proteins that assist in the late maturation steps of the functional core of the 30S ribosomal subunit. Associates with free 30S ribosomal subunits (but not with 30S subunits that are part of 70S ribosomes or polysomes). Required for efficient processing of 16S rRNA. May interact with the 5'-terminal helix region of 16S rRNA. In Chromohalobacter salexigens (strain ATCC BAA-138 / DSM 3043 / CIP 106854 / NCIMB 13768 / 1H11), this protein is Ribosome-binding factor A.